We begin with the raw amino-acid sequence, 254 residues long: Protein U52 (254 aa).

The protein belongs to the herpesviridae UL79 family.

The chain is Protein U52 (U52) from Homo sapiens (Human).